Reading from the N-terminus, the 167-residue chain is Transcription initiation factor TFIID subunit 10 (167 aa).

Disordered regions lie at residues 1–56 and 119–139; these read MASD…EESE and TTNI…NPKD. The span at 41–56 shows a compositional bias: acidic residues; that stretch reads EQPDVEEVPLTTEESE. The span at 130-139 shows a compositional bias: basic and acidic residues; the sequence is SSKDKKNPKD.

It belongs to the TAF10 family. Belongs to the TFIID complex which is composed of TATA binding protein (Tbp) and a number of TBP-associated factors (TAFs). Also a member of the histone acetylase (HAT) complex. At embryonic stage 9, highest expression is detected within the ectoderm, ventral chord, and anterior foregut primordium. Later in development preferential expression is in the foregut, proventriculus, and central nervous system. Coexpressed with Taf10b in the lateral epidermis and anal plate.

Its subcellular location is the cytoplasm. The protein resides in the nucleus. In terms of biological role, TFIID is a multimeric protein complex that plays a central role in mediating promoter responses to various activators and repressors. The chain is Transcription initiation factor TFIID subunit 10 from Drosophila melanogaster (Fruit fly).